A 1204-amino-acid chain; its full sequence is ATP-dependent helicase/nuclease subunit A (1204 aa).

The region spanning 2–469 (TNFTKEQDQA…IILADNFRST (468 aa)) is the UvrD-like helicase ATP-binding domain. 23–30 (ASAGSGKT) is a binding site for ATP. Residues 497–784 (GQLQFGASYY…KLMTIHASKG (288 aa)) form the UvrD-like helicase C-terminal domain.

This sequence belongs to the helicase family. AddA subfamily. As to quaternary structure, heterodimer of AddA and AddB/RexB. The cofactor is Mg(2+).

It carries out the reaction Couples ATP hydrolysis with the unwinding of duplex DNA by translocating in the 3'-5' direction.. It catalyses the reaction ATP + H2O = ADP + phosphate + H(+). Functionally, the heterodimer acts as both an ATP-dependent DNA helicase and an ATP-dependent, dual-direction single-stranded exonuclease. Recognizes the chi site generating a DNA molecule suitable for the initiation of homologous recombination. The AddA nuclease domain is required for chi fragment generation; this subunit has the helicase and 3' -&gt; 5' nuclease activities. In Lactobacillus gasseri (strain ATCC 33323 / DSM 20243 / BCRC 14619 / CIP 102991 / JCM 1131 / KCTC 3163 / NCIMB 11718 / NCTC 13722 / AM63), this protein is ATP-dependent helicase/nuclease subunit A.